Here is a 221-residue protein sequence, read N- to C-terminus: MNRLIVLCLFVAMIYATIALPKKEDISNDERSISVSKVPVKKSVAIAGAVIEGAKLTFGILEKILTVLGDINRKIAIGVDNESGREWTAQNAYFFSGTSDVVLPASVPNTKAFLYNAQKDRGPVATGVVGVLAYSLSNGNTLGILFSVPYDYNLYSNWWNIKLYKGIKRADRDMYNDLYYYAHPHKGDNGWHENSLGFGLKSKGFMTSSGQTILQIRVSRA.

Residues Met-1–Ala-19 form the signal peptide. A propeptide spanning residues Leu-20 to Lys-42 is cleaved from the precursor. Residues Ala-45 to Ala-54 form a plays an important role in the hemolytic activity region. Positions Gly-53–Asn-72 are N-terminal region. The phosphocholine site is built by Ser-96, Val-129, Ser-147, Pro-149, Tyr-175, Tyr-179, and Tyr-180. A trp-rich region, which is important for the binding to lipid membrane region spans residues Ser-147–Lys-162. Residues Lys-186–Asp-188 carry the Cell attachment site, crucial for protein stability motif.

This sequence belongs to the actinoporin family. Sea anemone subfamily. In terms of assembly, octamer or nonamer in membranes. Monomer in the soluble state.

It localises to the secreted. The protein localises to the nematocyst. The protein resides in the target cell membrane. Its function is as follows. Pore-forming protein that forms cations-selective hydrophilic pores of around 1 nm and causes cytolysis. Pore formation is a multi-step process that involves specific recognition of membrane sphingomyelin (but neither cholesterol nor phosphatidylcholine) using aromatic rich region and adjacent phosphocholine (POC) binding site, firm binding to the membrane (mainly driven by hydrophobic interactions) accompanied by the transfer of the N-terminal region to the lipid-water interface and finally pore formation after oligomerization of monomers. The protein is DELTA-actitoxin-Ucs1a of Urticina crassicornis (Mottled anemone).